A 503-amino-acid polypeptide reads, in one-letter code: ATP synthase subunit beta (503 aa).

Residue 157 to 164 (GGAGVGKT) coordinates ATP.

It belongs to the ATPase alpha/beta chains family. F-type ATPases have 2 components, CF(1) - the catalytic core - and CF(0) - the membrane proton channel. CF(1) has five subunits: alpha(3), beta(3), gamma(1), delta(1), epsilon(1). CF(0) has three main subunits: a(1), b(2) and c(9-12). The alpha and beta chains form an alternating ring which encloses part of the gamma chain. CF(1) is attached to CF(0) by a central stalk formed by the gamma and epsilon chains, while a peripheral stalk is formed by the delta and b chains.

The protein resides in the cell inner membrane. The enzyme catalyses ATP + H2O + 4 H(+)(in) = ADP + phosphate + 5 H(+)(out). Functionally, produces ATP from ADP in the presence of a proton gradient across the membrane. The catalytic sites are hosted primarily by the beta subunits. The polypeptide is ATP synthase subunit beta (Flavobacterium psychrophilum (strain ATCC 49511 / DSM 21280 / CIP 103535 / JIP02/86)).